We begin with the raw amino-acid sequence, 247 residues long: MSVTMREMLEAGVHFGHQTRFWNPKMAPFIFGHRNKIHIINLEKTLPMYLDALKYVRQLAANRGTILFVGTKRQSREILAEEAARAGMPYVDSRWLGGMLTNFKTVKISIKRLKDMEAAKEAGALESMSKKEALMFEREMEKLEKSIGGIKDMGGIPDAIFVVDVGYHKIAVTEAAKLGIPVIGVVDTNHSPEGIDYVIPGNDDSSKAVALYVRGVADAILEGRANAVQEVVEAARGGDDFVEVQEG.

It belongs to the universal ribosomal protein uS2 family.

The chain is Small ribosomal subunit protein uS2 from Ralstonia nicotianae (strain ATCC BAA-1114 / GMI1000) (Ralstonia solanacearum).